A 484-amino-acid chain; its full sequence is Ribosomal RNA small subunit methyltransferase F (484 aa).

S-adenosyl-L-methionine contacts are provided by residues 126–132 (AAAPGSK), Glu150, Asp177, and Asp195. The Nucleophile role is filled by Cys248.

It belongs to the class I-like SAM-binding methyltransferase superfamily. RsmB/NOP family.

Its subcellular location is the cytoplasm. It catalyses the reaction cytidine(1407) in 16S rRNA + S-adenosyl-L-methionine = 5-methylcytidine(1407) in 16S rRNA + S-adenosyl-L-homocysteine + H(+). Functionally, specifically methylates the cytosine at position 1407 (m5C1407) of 16S rRNA. This chain is Ribosomal RNA small subunit methyltransferase F, found in Pectobacterium atrosepticum (strain SCRI 1043 / ATCC BAA-672) (Erwinia carotovora subsp. atroseptica).